The chain runs to 148 residues: Probable transcriptional regulator SyrB (148 aa).

A disordered region spans residues 1-58 (MADESNTGPVAAAEAVAETQAPAGKRKSSSRRQRTAAGQVAESKTTAKPKRYSETERA). The segment covering 7 to 23 (TGPVAAAEAVAETQAPA) has biased composition (low complexity). Over residues 24 to 34 (GKRKSSSRRQR) the composition is skewed to basic residues.

The protein belongs to the SyrB family.

Its function is as follows. Responsible for the repression of SyrM activity. This is Probable transcriptional regulator SyrB (syrB) from Sinorhizobium fredii (strain NBRC 101917 / NGR234).